A 144-amino-acid polypeptide reads, in one-letter code: Large ribosomal subunit protein uL16 (144 aa).

The protein belongs to the universal ribosomal protein uL16 family. In terms of assembly, part of the 50S ribosomal subunit.

Binds 23S rRNA and is also seen to make contacts with the A and possibly P site tRNAs. In Bacillus mycoides (strain KBAB4) (Bacillus weihenstephanensis), this protein is Large ribosomal subunit protein uL16.